A 603-amino-acid chain; its full sequence is Glutamyl-tRNA(Gln) amidotransferase subunit B, mitochondrial (603 aa).

A mitochondrion-targeting transit peptide spans Met-1 to Leu-32. Residues Ala-12–Arg-59 form a disordered region. The span at Ser-31–Leu-48 shows a compositional bias: low complexity.

Belongs to the GatB/GatE family. GatB subfamily. As to quaternary structure, subunit of the heterotrimeric GatCAB amidotransferase (AdT) complex, composed of A, B and C subunits.

The protein localises to the mitochondrion. It carries out the reaction L-glutamyl-tRNA(Gln) + L-glutamine + ATP + H2O = L-glutaminyl-tRNA(Gln) + L-glutamate + ADP + phosphate + H(+). In terms of biological role, allows the formation of correctly charged Gln-tRNA(Gln) through the transamidation of misacylated Glu-tRNA(Gln) in the mitochondria. The reaction takes place in the presence of glutamine and ATP through an activated gamma-phospho-Glu-tRNA(Gln). In Arthroderma otae (strain ATCC MYA-4605 / CBS 113480) (Microsporum canis), this protein is Glutamyl-tRNA(Gln) amidotransferase subunit B, mitochondrial.